The primary structure comprises 141 residues: Transcription antitermination protein NusB (141 aa).

Belongs to the NusB family.

Its function is as follows. Involved in transcription antitermination. Required for transcription of ribosomal RNA (rRNA) genes. Binds specifically to the boxA antiterminator sequence of the ribosomal RNA (rrn) operons. The protein is Transcription antitermination protein NusB of Clostridium botulinum (strain Loch Maree / Type A3).